A 460-amino-acid chain; its full sequence is Cyclic 2,3-diphosphoglycerate synthetase (460 aa).

Homodimer.

It localises to the cytoplasm. The enzyme catalyses (2R)-2,3-bisphosphoglycerate + ATP + H(+) = cyclic (2R)-2,3-bisphosphoglycerate + ADP + phosphate. Catalyzes the formation of cyclic 2,3-diphosphoglycerate (cDPG) by formation of an intramolecular phosphoanhydride bond at the expense of ATP. It is also able to catalyze the hydrolysis of cDPG but with significant slower rates (8-10 times). May be involved in thermoadaptation. The sequence is that of Cyclic 2,3-diphosphoglycerate synthetase (cpgS) from Methanothermus fervidus (strain ATCC 43054 / DSM 2088 / JCM 10308 / V24 S).